We begin with the raw amino-acid sequence, 202 residues long: Superoxide dismutase [Mn] (202 aa).

Mn(2+) is bound by residues His27, His82, Asp164, and His168.

Belongs to the iron/manganese superoxide dismutase family. As to quaternary structure, homodimer. Mn(2+) serves as cofactor.

The catalysed reaction is 2 superoxide + 2 H(+) = H2O2 + O2. Its function is as follows. Destroys superoxide anion radicals which are normally produced within the cells and which are toxic to biological systems. This chain is Superoxide dismutase [Mn] (sodA), found in Listeria ivanovii.